A 521-amino-acid chain; its full sequence is 56 kDa type-specific antigen (521 aa).

Positions 1–22 (MRKIMLIASAMSALSLPFSANA) are cleaved as a signal peptide. A helical transmembrane segment spans residues 64-86 (LPLIKGMPFGVTLAAGMTITPGV). The interval 386-415 (LGVDQGQEGGCSKDKKQSDTTAEESKKEGK) is disordered. Basic and acidic residues predominate over residues 396 to 415 (CSKDKKQSDTTAEESKKEGK). The helical transmembrane segment at 469–484 (TGMVGSLALGVAANVA) threads the bilayer.

It localises to the cell membrane. Functionally, may be an adherent factor for rickettsial adsorption to the host-cell surface and a determinant of virulence of individual rickettsial strain. It is the major outer membrane protein. The polypeptide is 56 kDa type-specific antigen (Orientia tsutsugamushi (Rickettsia tsutsugamushi)).